A 262-amino-acid chain; its full sequence is 5'-nucleotidase SurE (262 aa).

Residues Asp8, Asp9, Ser40, and Asn92 each coordinate a divalent metal cation.

The protein belongs to the SurE nucleotidase family. A divalent metal cation is required as a cofactor.

Its subcellular location is the cytoplasm. The enzyme catalyses a ribonucleoside 5'-phosphate + H2O = a ribonucleoside + phosphate. Nucleotidase that shows phosphatase activity on nucleoside 5'-monophosphates. This Xylella fastidiosa (strain M23) protein is 5'-nucleotidase SurE.